A 21-amino-acid chain; its full sequence is M-lycotoxin-Ls4a (21 aa).

Leucine amide is present on Leu21.

As to expression, expressed by the venom gland.

It is found in the secreted. Its function is as follows. May inhibit growth of bacteria. The polypeptide is M-lycotoxin-Ls4a (Lycosa singoriensis (Wolf spider)).